Consider the following 70-residue polypeptide: Protein FlmC (70 aa).

Its function is as follows. Component of a type I toxin-antitoxin (TA) system. Either this protein or sequences upstream of it are required for translation of downstream flmA; this could be translationally coupled to flmA. The polypeptide is Protein FlmC (flmC) (Escherichia coli (strain K12)).